The primary structure comprises 365 residues: Protein RecA (365 aa).

73–80 is a binding site for ATP; it reads GPESSGKT.

Belongs to the RecA family.

It localises to the cytoplasm. Can catalyze the hydrolysis of ATP in the presence of single-stranded DNA, the ATP-dependent uptake of single-stranded DNA by duplex DNA, and the ATP-dependent hybridization of homologous single-stranded DNAs. It interacts with LexA causing its activation and leading to its autocatalytic cleavage. The protein is Protein RecA of Prochlorococcus marinus (strain MIT 9215).